Consider the following 241-residue polypeptide: Nopaline transport system permease protein NocM (241 aa).

Residues 17–215 form the ABC transmembrane type-1 domain; sequence VPTTLTLAFI…FITFVVSRLV (199 aa). 5 consecutive transmembrane segments (helical) span residues 21–41, 52–72, 95–115, 161–181, and 191–211; these read LTLA…VALM, LAYG…MFLI, PWFC…SEII, VMLI…EVTG, and YSPV…TFVV.

It belongs to the binding-protein-dependent transport system permease family. HisMQ subfamily.

Its subcellular location is the cell inner membrane. Functionally, component of the nopaline active transport system probably consisting of four subunits: Q, M, P and T. This system is also capable of transporting octopine provided that catabolic functions are induced with nopaline. The protein is Nopaline transport system permease protein NocM (nocM) of Agrobacterium fabrum (strain C58 / ATCC 33970) (Agrobacterium tumefaciens (strain C58)).